Reading from the N-terminus, the 197-residue chain is Recombination protein RecR (197 aa).

A C4-type zinc finger spans residues 55-70 (CVQCRDFTESEICTIC). The Toprim domain maps to 78–173 (QQLCVVESPA…RPSRLAQGMP (96 aa)).

This sequence belongs to the RecR family.

In terms of biological role, may play a role in DNA repair. It seems to be involved in an RecBC-independent recombinational process of DNA repair. It may act with RecF and RecO. This Xanthomonas axonopodis pv. citri (strain 306) protein is Recombination protein RecR.